The primary structure comprises 338 residues: Ornithine carbamoyltransferase, catabolic (338 aa).

Carbamoyl phosphate contacts are provided by residues 65–68 (STRT), Q92, R116, and 143–146 (HPTQ). Residues N175, D239, and 243–244 (SM) each bind L-ornithine. Residues 280 to 281 (CL) and R325 each bind carbamoyl phosphate.

This sequence belongs to the aspartate/ornithine carbamoyltransferase superfamily. OTCase family.

The protein resides in the cytoplasm. The enzyme catalyses carbamoyl phosphate + L-ornithine = L-citrulline + phosphate + H(+). Its pathway is amino-acid degradation; L-arginine degradation via ADI pathway; carbamoyl phosphate from L-arginine: step 2/2. Functionally, reversibly catalyzes the transfer of the carbamoyl group from carbamoyl phosphate (CP) to the N(epsilon) atom of ornithine (ORN) to produce L-citrulline. This Treponema denticola (strain ATCC 35405 / DSM 14222 / CIP 103919 / JCM 8153 / KCTC 15104) protein is Ornithine carbamoyltransferase, catabolic.